The primary structure comprises 1093 residues: Isoleucine--tRNA ligase, chloroplastic/mitochondrial (1093 aa).

The disordered stretch occupies residues 69 to 103 (PNNEFGHSSKRRSRGPVMAAKKASEGEKQEDGKYK). Over residues 90–103 (KASEGEKQEDGKYK) the composition is skewed to basic and acidic residues. The short motif at 155–165 (PYANGDLHMGH) is the 'HIGH' region element. Glu682 provides a ligand contact to L-isoleucyl-5'-AMP. Positions 723-727 (KMSKS) match the 'KMSKS' region motif. Lys726 contributes to the ATP binding site. Positions 1050, 1053, 1070, and 1073 each coordinate Zn(2+).

Belongs to the class-I aminoacyl-tRNA synthetase family.

Its subcellular location is the plastid. The protein localises to the chloroplast. The protein resides in the mitochondrion. The catalysed reaction is tRNA(Ile) + L-isoleucine + ATP = L-isoleucyl-tRNA(Ile) + AMP + diphosphate. This chain is Isoleucine--tRNA ligase, chloroplastic/mitochondrial, found in Arabidopsis thaliana (Mouse-ear cress).